The sequence spans 248 residues: NADP-dependent 3-hydroxy acid dehydrogenase YdfG (248 aa).

NADP(+) contacts are provided by residues 7–12, 32–33, 54–55, and Asn81; these read GATAGF, RR, and DV. Ser134 contributes to the substrate binding site. NADP(+) is bound by residues Tyr147, Lys151, and 177–185; that span reads PGLVGGTEF. Residue Tyr147 is the Proton acceptor of the active site.

The protein belongs to the short-chain dehydrogenases/reductases (SDR) family. In terms of assembly, homotetramer.

It catalyses the reaction 3-hydroxypropanoate + NADP(+) = 3-oxopropanoate + NADPH + H(+). It carries out the reaction L-allo-threonine + NADP(+) = aminoacetone + CO2 + NADPH. Its function is as follows. NADP-dependent dehydrogenase with broad substrate specificity acting on 3-hydroxy acids. Catalyzes the NADP-dependent oxidation of L-allo-threonine to L-2-amino-3-keto-butyrate, which is spontaneously decarboxylated into aminoacetone. Also acts on D-threonine, L-serine, D-serine, D-3-hydroxyisobutyrate, L-3-hydroxyisobutyrate, D-glycerate and L-glycerate. Able to catalyze the reduction of the malonic semialdehyde to 3-hydroxypropionic acid. YdfG is apparently supplementing RutE, the presumed malonic semialdehyde reductase involved in pyrimidine degradation since both are able to detoxify malonic semialdehyde. This chain is NADP-dependent 3-hydroxy acid dehydrogenase YdfG, found in Shigella flexneri.